Consider the following 241-residue polypeptide: Parkin coregulated gene protein homolog (241 aa).

Microtubule inner protein component of sperm flagellar doublet microtubules. Forms a large molecular chaperone complex containing heat shock proteins 70 and 90 and chaperonin components. Interacts with STIP1, PRKN, GPR37, HSPA8, TCP1/CCT1, CCT2, CCT3, CCT4, CCT5, CCT6A, CCT7 and CCT8. Interacts with MEIG1.

It localises to the cytoplasm. It is found in the cytoskeleton. Its subcellular location is the cilium axoneme. The protein localises to the flagellum axoneme. Microtubule inner protein (MIP) part of the dynein-decorated doublet microtubules (DMTs) in cilia axoneme, which is required for motile cilia beating. Suppresses cell death induced by accumulation of unfolded Pael receptor (Pael-R, a substrate of Parkin). Facilitates the formation of inclusions consisting of Pael-R, molecular chaperones, protein degradation molecules and itself when proteasome is inhibited. May play an important role in the formation of Lewy bodies and protection of dopaminergic neurons against Parkinson disease. The sequence is that of Parkin coregulated gene protein homolog (Pacrg) from Mus musculus (Mouse).